The sequence spans 831 residues: von Willebrand factor A domain-containing protein DDB_G0285981 (831 aa).

The VIT domain maps to 60 to 188; it reads RDTFGLKTFS…NVTIHLTIIS (129 aa). The VWFA domain occupies 312-480; that stretch reads EFIFLIDCSG…NFEEQVMKLV (169 aa).

This is von Willebrand factor A domain-containing protein DDB_G0285981 from Dictyostelium discoideum (Social amoeba).